The following is a 288-amino-acid chain: Ribosomal RNA small subunit methyltransferase A (288 aa).

S-adenosyl-L-methionine is bound by residues asparagine 28, leucine 30, glycine 55, glutamate 77, aspartate 103, and asparagine 123.

Belongs to the class I-like SAM-binding methyltransferase superfamily. rRNA adenine N(6)-methyltransferase family. RsmA subfamily.

The protein resides in the cytoplasm. It catalyses the reaction adenosine(1518)/adenosine(1519) in 16S rRNA + 4 S-adenosyl-L-methionine = N(6)-dimethyladenosine(1518)/N(6)-dimethyladenosine(1519) in 16S rRNA + 4 S-adenosyl-L-homocysteine + 4 H(+). Specifically dimethylates two adjacent adenosines (A1518 and A1519) in the loop of a conserved hairpin near the 3'-end of 16S rRNA in the 30S particle. May play a critical role in biogenesis of 30S subunits. The protein is Ribosomal RNA small subunit methyltransferase A of Xanthobacter autotrophicus (strain ATCC BAA-1158 / Py2).